Consider the following 660-residue polypeptide: DNA mismatch repair protein MutL (660 aa).

Residues 341 to 355 (SFQSDGAPPTQQLSS) are compositionally biased toward polar residues. 2 disordered regions span residues 341–362 (SFQSDGAPPTQQLSSDVREKAE) and 378–398 (ALSPTKQELPKSPERSERVER). Positions 385–398 (ELPKSPERSERVER) are enriched in basic and acidic residues.

Belongs to the DNA mismatch repair MutL/HexB family.

Functionally, this protein is involved in the repair of mismatches in DNA. It is required for dam-dependent methyl-directed DNA mismatch repair. May act as a 'molecular matchmaker', a protein that promotes the formation of a stable complex between two or more DNA-binding proteins in an ATP-dependent manner without itself being part of a final effector complex. This chain is DNA mismatch repair protein MutL, found in Heliobacterium modesticaldum (strain ATCC 51547 / Ice1).